A 274-amino-acid polypeptide reads, in one-letter code: N-acetylmuramic acid 6-phosphate etherase (274 aa).

Positions 52 to 215 constitute an SIS domain; sequence IVPRMEQGGR…STSIMIRLGR (164 aa). Glutamate 80 (proton donor) is an active-site residue. The active site involves glutamate 111.

This sequence belongs to the GCKR-like family. MurNAc-6-P etherase subfamily. As to quaternary structure, homodimer.

The enzyme catalyses N-acetyl-D-muramate 6-phosphate + H2O = N-acetyl-D-glucosamine 6-phosphate + (R)-lactate. It participates in amino-sugar metabolism; N-acetylmuramate degradation. In terms of biological role, specifically catalyzes the cleavage of the D-lactyl ether substituent of MurNAc 6-phosphate, producing GlcNAc 6-phosphate and D-lactate. The chain is N-acetylmuramic acid 6-phosphate etherase from Porphyromonas gingivalis (strain ATCC 33277 / DSM 20709 / CIP 103683 / JCM 12257 / NCTC 11834 / 2561).